The primary structure comprises 295 residues: Protein LplC (295 aa).

A run of 6 helical transmembrane segments spans residues 21-41 (ILFL…IIAG), 81-101 (VSIF…FTMA), 116-136 (LNLV…YLVV), 142-162 (LDTY…LIII), 199-219 (VIAT…FHAL), and 260-280 (GIKL…YPFL). An ABC transmembrane type-1 domain is found at 79 to 280 (MGVSIFITVV…LPILAVYPFL (202 aa)).

Belongs to the binding-protein-dependent transport system permease family. CysTW subfamily.

Its subcellular location is the cell membrane. The sequence is that of Protein LplC (lplC) from Bacillus subtilis (strain 168).